The primary structure comprises 479 residues: Protein kinase 2 (479 aa).

Residues 1–136 (MGKGQSKIKN…NGNDDEDEGP (136 aa)) form a disordered region. Low complexity-rich tracts occupy residues 52–65 (AQQQQQQQQTTTAA) and 79–96 (IPAPATQTPITQTGTPTI). Residues 102–115 (NTDNNNINGASNEA) show a composition bias toward polar residues. A Protein kinase domain is found at 153 to 407 (FELLNVIGKG…GGEVKQHPWF (255 aa)). ATP-binding positions include 159 to 167 (IGKGSFGKV) and Lys-182. The Proton acceptor role is filled by Asp-276. Thr-309 carries the post-translational modification Phosphothreonine; by autocatalysis. Residues 408–479 (KNIDWEKLDR…TYVADSILKD (72 aa)) form the AGC-kinase C-terminal domain. The residue at position 470 (Thr-470) is a Phosphothreonine.

It belongs to the protein kinase superfamily. AGC Ser/Thr protein kinase family. S6 kinase subfamily. Seems to be myristoylated.

The protein resides in the cytoplasm. It is found in the cell membrane. The enzyme catalyses L-seryl-[protein] + ATP = O-phospho-L-seryl-[protein] + ADP + H(+). It catalyses the reaction L-threonyl-[protein] + ATP = O-phospho-L-threonyl-[protein] + ADP + H(+). Required for morphogenesis during multicellular development. Phosphorylates talB, gefN, gefS, PI4P 5-kinase and gacQ. This is Protein kinase 2 (pkgB) from Dictyostelium discoideum (Social amoeba).